The chain runs to 60 residues: Large ribosomal subunit protein bL32 (60 aa).

A compositionally biased stretch (basic residues) spans 1–23 (MAKHPVPKKKTSKSKRDMRRSHH). Residues 1–26 (MAKHPVPKKKTSKSKRDMRRSHHALT) are disordered.

The protein belongs to the bacterial ribosomal protein bL32 family.

This is Large ribosomal subunit protein bL32 from Deinococcus deserti (strain DSM 17065 / CIP 109153 / LMG 22923 / VCD115).